Reading from the N-terminus, the 381-residue chain is Zinc finger CCCH domain-containing protein 61 (381 aa).

The interval 1 to 39 (MDVEHHKSGHISRPTVDIPPRKLLSSAKSPSSVSSPLRD) is disordered. Over residues 21-37 (RKLLSSAKSPSSVSSPL) the composition is skewed to low complexity. C3H1-type zinc fingers lie at residues 101 to 128 (YTGE…HGVF) and 137 to 159 (YRTE…AHSP).

As to quaternary structure, interacts with MARD1/FLZ9 and RD21A via its CCCH zing finger domains.

It is found in the cytoplasm. It localises to the stress granule. The protein localises to the P-body. The polypeptide is Zinc finger CCCH domain-containing protein 61 (Arabidopsis thaliana (Mouse-ear cress)).